A 447-amino-acid polypeptide reads, in one-letter code: Gustatory receptor family protein 3 (447 aa).

Residues 1–69 lie on the Extracellular side of the membrane; it reads MTITASNTLE…HTHSSARNTM (69 aa). The helical transmembrane segment at 70-90 threads the bilayer; it reads FKWPLTIYNYLTLAILTAATI. Over 91–116 the chain is Cytoplasmic; that stretch reads RRISQIKQKSATNEEKDAAFHVLNPT. A helical transmembrane segment spans residues 117 to 137; that stretch reads FVLTLCHALLMFSGLAAGFLL. The Extracellular segment spans residues 138-171; it reads LKLQKQREKMYHVLDQGLGRNRNEEHDSHHFKLN. A helical membrane pass occupies residues 172–192; that stretch reads KLFISISFSFAAALSFVQIAT. Over 193–211 the chain is Cytoplasmic; the sequence is KMRYLDLPDTPDLINRKIY. Residues 212-232 traverse the membrane as a helical segment; sequence FVILEGYVIFIASSCISLVAI. Residues 233–292 lie on the Extracellular side of the membrane; sequence LFFQLCRILQFSIGQLIEEMVPKEKEECPLPEQSLQQIHDVQIHYQEISNAKLYIEQNFS. The chain crosses the membrane as a helical span at residues 293 to 313; it reads FSLFYTYGCCIPLTCLLGYIA. Residues 314-328 are Cytoplasmic-facing; sequence FRNGIQADMAETFSV. Residues 329–349 traverse the membrane as a helical segment; it reads AIWLTNTMLALMLFSIPAFMI. Topologically, residues 350-405 are extracellular; it reads AEEGDKLLTASFKMYHETLCEERDLLVLSQMSFLSFQMHATKLTLTAGNFFMMNRK. Residues 406–426 form a helical membrane-spanning segment; the sequence is IMISLFSAIFTYFLILVQFDA. Over 427-447 the chain is Cytoplasmic; the sequence is EKERAGECNNQSRVLIVQPPV.

Belongs to the insect chemoreceptor superfamily. Gustatory receptor (GR) family. Expressed in I2 pharyngeal neurons.

Its subcellular location is the membrane. Its function is as follows. Chemoreceptor involved in light-induced avoidance behavior. Probably acts as a molecular sensor in I2 pharyngeal neurons, required for the inhibition of feeding in response to light and hydrogen peroxide. Involved in circadian rhythms, probably by acting as a light sensor. In contrast to lite-1, does not act as a photoreceptor. The chain is Gustatory receptor family protein 3 from Caenorhabditis elegans.